Consider the following 319-residue polypeptide: 12-(S)-hydroxy-5,8,10,14-eicosatetraenoic acid receptor (319 aa).

At 1–16 (MPFPNCSAPSTVVATA) the chain is on the extracellular side. Residue N5 is glycosylated (N-linked (GlcNAc...) asparagine). A helical transmembrane segment spans residues 17–37 (VGVLLGLECGLGLLGNAVALW). Residues 38-52 (TFLFRVRVWKPYAVY) are Cytoplasmic-facing. The helical transmembrane segment at 53–73 (LLNLALADLLLAACLPFLAAF) threads the bilayer. Topologically, residues 74–91 (YLSLQAWHLGRVGCWALH) are extracellular. The chain crosses the membrane as a helical span at residues 92-110 (FLLDLSRSVGMAFLAAVAL). Topologically, residues 111–131 (DRYLRVVHPRLKVNLLSPQAA) are cytoplasmic. A helical transmembrane segment spans residues 132-152 (LGVSGLVWLLMVALTCPGLLI). Topologically, residues 153–180 (SEAAQNSTRCHSFYSRADGSFSIIWQEA) are extracellular. A helical transmembrane segment spans residues 181 to 201 (LSCLQFVLPFGLIVFCNAGII). Over 202–219 (RALQKRLREPEKQPKLQR) the chain is Cytoplasmic. A helical transmembrane segment spans residues 220–240 (AQALVTLVVVLFALCFLPCFL). At 241–265 (ARVLMHIFQNLGSCRALCAVAHTSD) the chain is on the extracellular side. Residues 266–284 (VTGSLTYLHSVLNPVVYCF) form a helical membrane-spanning segment. Topologically, residues 285 to 319 (SSPTFRSSYRRVFHTLRGKGQAAEPPDFNPRDSYS) are cytoplasmic.

This sequence belongs to the G-protein coupled receptor 1 family. In terms of assembly, interacts with KRAS; in a farnesylation-dependent manner.

It is found in the cell membrane. In terms of biological role, high-affinity receptor for 12-(S)-hydroxy-5,8,10,14-eicosatetraenoic acid (12-S-HETE), with much lower affinities for other HETE isomers. 12-S-HETE is a eicosanoid, a 12-lipoxygenase (ALOX12) metabolite of arachidonic acid, involved in many physiologic and pathologic processes. 12-S-HETE-binding leads to activation of ERK1/2 (MAPK3/MAPK1), MEK, and NF-kappa-B pathways leading to cell growth. Plays a crucial role for proliferation, survival and macropinocytosis of KRAS-dependent cancer cells by mediating the translocation of KRAS from the endoplasmic reticulum to the plasma membrane (PM) and its association with the PM. Contributes to enhanced immune responses by inducing dendrite protrusion of small intestinal CX3CR1(+) phagocytes for the uptake of luminal antigens. Acts also as a key receptor for 12-(S)-HETE-mediated liver ischemia reperfusion injury. Its function is as follows. Proton-sensing G protein-coupled receptor. This Homo sapiens (Human) protein is 12-(S)-hydroxy-5,8,10,14-eicosatetraenoic acid receptor (GPR31).